Reading from the N-terminus, the 357-residue chain is Protein RecA (357 aa).

ATP is bound at residue 73–80; sequence GPESSGKT.

It belongs to the RecA family.

The protein localises to the cytoplasm. Can catalyze the hydrolysis of ATP in the presence of single-stranded DNA, the ATP-dependent uptake of single-stranded DNA by duplex DNA, and the ATP-dependent hybridization of homologous single-stranded DNAs. It interacts with LexA causing its activation and leading to its autocatalytic cleavage. The protein is Protein RecA of Nitratidesulfovibrio vulgaris (strain DSM 19637 / Miyazaki F) (Desulfovibrio vulgaris).